The primary structure comprises 99 residues: Acylphosphatase-1 (99 aa).

Alanine 2 is modified (N-acetylalanine). One can recognise an Acylphosphatase-like domain in the interval 9 to 99 (SVDYEVSGRV…LEHTDFQIRK (91 aa)). Active-site residues include arginine 24 and asparagine 42.

Belongs to the acylphosphatase family. As to expression, organ-common type isozyme is found in many different tissues.

The catalysed reaction is an acyl phosphate + H2O = a carboxylate + phosphate + H(+). This chain is Acylphosphatase-1 (ACYP1), found in Gallus gallus (Chicken).